Consider the following 711-residue polypeptide: Triacylglycerol hydrolase DDHD2 (711 aa).

The tract at residues Met1 to Ser24 is disordered. The region spanning Asp30–Arg112 is the WWE domain. Catalysis depends on Ser351, which acts as the Nucleophile. The SAM domain occupies Gly385–Met448. Ser447 carries the post-translational modification Phosphoserine. Disordered regions lie at residues Gly449–Cys470 and Leu609–Ser638. Residues Leu495–Gln700 form the DDHD domain. A compositionally biased stretch (acidic residues) spans Thr614–Ser624.

This sequence belongs to the PA-PLA1 family. Forms homooligomers and, to a much smaller extent, heterooligomers with DDHD1. In terms of tissue distribution, widely expressed (at protein level).

Its subcellular location is the cytoplasm. The protein resides in the cytosol. The protein localises to the endoplasmic reticulum-Golgi intermediate compartment. It is found in the golgi apparatus. It localises to the cis-Golgi network. It carries out the reaction a triacylglycerol + H2O = a diacylglycerol + a fatty acid + H(+). The enzyme catalyses a diacylglycerol + H2O = a monoacylglycerol + a fatty acid + H(+). The catalysed reaction is a 1,3-diacylglycerol + H2O = a 1-acylglycerol + a fatty acid + H(+). It catalyses the reaction a 1-acylglycerol + H2O = glycerol + a fatty acid + H(+). It carries out the reaction 1,2,3-tri-(9Z-octadecenoyl)-glycerol + H2O = di-(9Z)-octadecenoylglycerol + (9Z)-octadecenoate + H(+). The enzyme catalyses di-(9Z)-octadecenoylglycerol + H2O = (9Z-octadecenoyl)-glycerol + (9Z)-octadecenoate + H(+). The catalysed reaction is 1,3-di-(9Z-octadecenoyl)-glycerol + H2O = 1-(9Z-octadecenoyl)-glycerol + (9Z)-octadecenoate + H(+). It catalyses the reaction trihexadecanoylglycerol + H2O = dihexadecanoylglycerol + hexadecanoate + H(+). It carries out the reaction 1,2-di-(9Z-octadecenoyl)-sn-glycero-3-phosphocholine + H2O = (9Z-octadecenoyl)-sn-glycero-3-phosphocholine + (9Z)-octadecenoate + H(+). The enzyme catalyses 1-(9Z-octadecenoyl)-glycerol + H2O = glycerol + (9Z)-octadecenoate + H(+). The catalysed reaction is 1,2-di-(9Z-octadecenoyl)-sn-glycero-3-phosphate + H2O = 2-(9Z-octadecenoyl)-sn-glycero-3-phosphate + (9Z)-octadecenoate + H(+). It catalyses the reaction 1-hexadecanoyl-2-(9Z-octadecenoyl)-sn-glycero-3-phosphate + H2O = 2-(9Z-octadecenoyl)-sn-glycero-3-phosphate + hexadecanoate + H(+). It carries out the reaction 1-hexadecanoyl-2-(9Z-octadecenoyl)-sn-glycero-3-phosphoethanolamine + H2O = 2-(9Z-octadecenoyl)-sn-glycero-3-phosphoethanolamine + hexadecanoate + H(+). The enzyme catalyses 1-hexadecanoyl-2-(9Z-octadecenoyl)-sn-glycero-3-phospho-L-serine + H2O = 2-(9Z-octadecenoyl)-sn-glycero-3-phospho-L-serine + hexadecanoate + H(+). The catalysed reaction is 1-hexadecanoyl-2-(9Z-octadecenoyl)-sn-glycero-3-phosphocholine + H2O = 2-(9Z-octadecenoyl)-sn-glycero-3-phosphocholine + hexadecanoate + H(+). Functionally, diacylglycerol (DAG) and triacylglycerol (TAG) lipase required for proper lipid homeostasis in the central nervous system. It cooperates with PNPLA2/ATGL in neuronal TAG catabolism and hydrolyzes sn-1,3 DAG downstream of PNPLA2/ATGL. In vitro, it also acts as a phospholipase that hydrolyzes preferentially phosphatidic acids, including 1,2-dioleoyl-sn-phosphatidic acid, phosphatidylcholine and phosphatidylethanolamine. Specifically binds to phosphatidylinositol 3-phosphate (PI(3)P), phosphatidylinositol 4-phosphate (PI(4)P), phosphatidylinositol 5-phosphate (PI(5)P) and possibly phosphatidylinositol 4,5-bisphosphate (PI(4,5)P2). May be involved in the maintenance of the endoplasmic reticulum and/or Golgi structures. May regulate the transport between Golgi apparatus and plasma membrane. In Homo sapiens (Human), this protein is Triacylglycerol hydrolase DDHD2.